Here is an 854-residue protein sequence, read N- to C-terminus: Periodic tryptophan protein 2 homolog (854 aa).

WD repeat units follow at residues 9-52, 53-93, 94-132, 144-183, 188-227, 252-291, 294-334, 337-376, 379-418, 422-464, 465-504, 507-546, and 569-608; these read NLVG…TFPF, ENHK…LHYF, NFKSPVGAIEFSPNGKFFAVSLGKLIQVWRTPNSLEERE, GHFDDIVSISWSADSRFFISTSKDLTARLHSVDPIEGFHP, GHKNTVVSGFFSKDQQTIYTVSKDGALFVWKYSPLFQAGE, NQNSKLRCAAFHPTSNLLVVGFSSGLFGIYELPSFTMLYQ, ITQS…YVLK, SHYDALSTLQYSSDGQRIITGADDGKIKVWDMNSGFCIVT, QHTSAVSGLCFSKRGNVLFSSSLDGSVRAWDLIRYRNFRT, PSRV…ETLA, GHEGPVSSLSFNSSGSLLASGSWDKTVRIWDIFSRSGIVE, PIPSDVLSLAFHPDGKEVCVASLDGQLTFWNVQEGKQTSL, and SLNKTFTSICYSADGSCVLSAGTSKYVCLYDIITGVLIKK. Phosphothreonine is present on Thr640. Ser645 bears the Phosphoserine mark. A WD 14 repeat occupies 668–709; that stretch reads TRPEIICHGVQFSPSGGAFAAATTEGLMIYSLYNDFLFDPIN.

The protein belongs to the WD repeat PWP2 family.

The polypeptide is Periodic tryptophan protein 2 homolog (Schizosaccharomyces pombe (strain 972 / ATCC 24843) (Fission yeast)).